The chain runs to 953 residues: ABC transporter A family member 11 (953 aa).

6 helical membrane-spanning segments follow: residues 33 to 53 (CLQI…EEAM), 230 to 250 (GPVF…GALV), 277 to 297 (TWEG…GMIF), 307 to 327 (FVLV…LAFA), 341 to 361 (VGFL…TGFP), and 417 to 437 (VISI…WFVL). The ABC transporter domain occupies 519-764 (VQIHGLAKTY…FGTGFVATVS (246 aa)). Residue 565–572 (GPNGAGKT) coordinates ATP.

The protein belongs to the ABC transporter superfamily. ABCA family. CPR flippase (TC 3.A.1.211) subfamily.

Its subcellular location is the membrane. This Arabidopsis thaliana (Mouse-ear cress) protein is ABC transporter A family member 11 (ABCA11).